A 493-amino-acid polypeptide reads, in one-letter code: Ketol-acid reductoisomerase (NADP(+)) (493 aa).

Positions 15–208 (AQLGKCRFMQ…GGDRAGVLES (194 aa)) constitute a KARI N-terminal Rossmann domain. Residues 45-48 (CGAQ), Arg68, Arg76, Ser78, and 108-110 (DKQ) each bind NADP(+). His132 is a catalytic residue. Residue Gly158 coordinates NADP(+). KARI C-terminal knotted domains follow at residues 209–344 (SFVA…NALA) and 345–486 (FAGK…MKDM). Positions 217, 221, 389, and 393 each coordinate Mg(2+). Ser414 serves as a coordination point for substrate.

The protein belongs to the ketol-acid reductoisomerase family. Mg(2+) is required as a cofactor.

The catalysed reaction is (2R)-2,3-dihydroxy-3-methylbutanoate + NADP(+) = (2S)-2-acetolactate + NADPH + H(+). It carries out the reaction (2R,3R)-2,3-dihydroxy-3-methylpentanoate + NADP(+) = (S)-2-ethyl-2-hydroxy-3-oxobutanoate + NADPH + H(+). Its pathway is amino-acid biosynthesis; L-isoleucine biosynthesis; L-isoleucine from 2-oxobutanoate: step 2/4. It participates in amino-acid biosynthesis; L-valine biosynthesis; L-valine from pyruvate: step 2/4. Involved in the biosynthesis of branched-chain amino acids (BCAA). Catalyzes an alkyl-migration followed by a ketol-acid reduction of (S)-2-acetolactate (S2AL) to yield (R)-2,3-dihydroxy-isovalerate. In the isomerase reaction, S2AL is rearranged via a Mg-dependent methyl migration to produce 3-hydroxy-3-methyl-2-ketobutyrate (HMKB). In the reductase reaction, this 2-ketoacid undergoes a metal-dependent reduction by NADPH to yield (R)-2,3-dihydroxy-isovalerate. This chain is Ketol-acid reductoisomerase (NADP(+)), found in Aeromonas salmonicida (strain A449).